The chain runs to 563 residues: Arginine--tRNA ligase (563 aa).

Residues 120 to 130 (PNIAKPFHIGH) carry the 'HIGH' region motif.

The protein belongs to the class-I aminoacyl-tRNA synthetase family. Monomer.

It localises to the cytoplasm. It carries out the reaction tRNA(Arg) + L-arginine + ATP = L-arginyl-tRNA(Arg) + AMP + diphosphate. This Clostridium botulinum (strain Loch Maree / Type A3) protein is Arginine--tRNA ligase.